The chain runs to 188 residues: Dual specificity protein phosphatase 18 (188 aa).

The Tyrosine-protein phosphatase domain occupies 19-160 (GLSQITKSLY…LIHYEFQLFG (142 aa)). Residues 95–141 (MKQGRTLLHCAAGVSRSAALCLAYLMKYHAMSLLDAHTWTKSCRPII) are sufficient for mitochondrial localization. Cysteine 104 serves as the catalytic Phosphocysteine intermediate.

This sequence belongs to the protein-tyrosine phosphatase family. Non-receptor class dual specificity subfamily.

Its subcellular location is the cytoplasm. It is found in the nucleus. The protein resides in the mitochondrion inner membrane. The catalysed reaction is O-phospho-L-tyrosyl-[protein] + H2O = L-tyrosyl-[protein] + phosphate. It carries out the reaction O-phospho-L-seryl-[protein] + H2O = L-seryl-[protein] + phosphate. It catalyses the reaction O-phospho-L-threonyl-[protein] + H2O = L-threonyl-[protein] + phosphate. Its function is as follows. Can dephosphorylate single and diphosphorylated synthetic MAPK peptides, with preference for the phosphotyrosine and diphosphorylated forms over phosphothreonine. In vitro, dephosphorylates p-nitrophenyl phosphate (pNPP). This is Dual specificity protein phosphatase 18 (DUSP18) from Pongo abelii (Sumatran orangutan).